Consider the following 607-residue polypeptide: Chaperone protein DnaK (607 aa).

T173 carries the phosphothreonine; by autocatalysis modification. The span at 577–588 (AQAQQGAEGAAS) shows a compositional bias: low complexity. Positions 577–607 (AQAQQGAEGAASQDDDVVDADFTEVKDDDNK) are disordered. Residues 589–598 (QDDDVVDADF) are compositionally biased toward acidic residues.

Belongs to the heat shock protein 70 family.

Its function is as follows. Acts as a chaperone. The polypeptide is Chaperone protein DnaK (Macrococcus caseolyticus (strain JCSC5402) (Macrococcoides caseolyticum)).